The primary structure comprises 170 residues: RNA pyrophosphohydrolase (170 aa).

The region spanning 6–149 is the Nudix hydrolase domain; that stretch reads GFRPNVGIIL…KRDVYRRALK (144 aa). A Nudix box motif is present at residues 39–60; the sequence is GGIKHNESPENALYRELEEEVG.

This sequence belongs to the Nudix hydrolase family. RppH subfamily. It depends on a divalent metal cation as a cofactor.

Functionally, accelerates the degradation of transcripts by removing pyrophosphate from the 5'-end of triphosphorylated RNA, leading to a more labile monophosphorylated state that can stimulate subsequent ribonuclease cleavage. This chain is RNA pyrophosphohydrolase, found in Saccharophagus degradans (strain 2-40 / ATCC 43961 / DSM 17024).